The chain runs to 1104 residues: Lon protease homolog, mitochondrial (1104 aa).

The N-terminal 54 residues, 1-54 (MLRGQTLRWRAALQTPRSLILRPLFAPGGYNVGPRSVLETSRRFRSLPPSLRTF), are a transit peptide targeting the mitochondrion. Disordered regions lie at residues 41-192 (SRRF…KPSV) and 296-317 (SLIP…TEKR). Composition is skewed to basic and acidic residues over residues 64-104 (KPPP…DSSG) and 125-144 (KAAD…EAEA). Residues 158–169 (SDSSSESKPSGS) are compositionally biased toward low complexity. Basic and acidic residues-rich tracts occupy residues 172-187 (GGDD…DKAL) and 308-317 (NSEDKTTEKR). The Lon N-terminal domain occupies 199–451 (VMAIPIAKRP…KGLVVLKKEL (253 aa)). 604-611 (GPPGVGKT) lines the ATP pocket. A compositionally biased stretch (basic and acidic residues) spans 825 to 839 (AEGKAAQEESEKETG). The segment at 825–857 (AEGKAAQEESEKETGPIESTSEQEKATTENPRV) is disordered. Positions 891–1077 (TFPPGVTMGL…SEVFDILFAD (187 aa)) constitute a Lon proteolytic domain. Residues Ser983 and Lys1026 contribute to the active site.

This sequence belongs to the peptidase S16 family. In terms of assembly, homohexamer or homoheptamer. Organized in a ring with a central cavity.

Its subcellular location is the mitochondrion matrix. It carries out the reaction Hydrolysis of proteins in presence of ATP.. Its function is as follows. ATP-dependent serine protease that mediates the selective degradation of misfolded, unassembled or oxidatively damaged polypeptides as well as certain short-lived regulatory proteins in the mitochondrial matrix. May also have a chaperone function in the assembly of inner membrane protein complexes. Participates in the regulation of mitochondrial gene expression and in the maintenance of the integrity of the mitochondrial genome. Binds to mitochondrial DNA in a site-specific manner. The polypeptide is Lon protease homolog, mitochondrial (pim1) (Emericella nidulans (strain FGSC A4 / ATCC 38163 / CBS 112.46 / NRRL 194 / M139) (Aspergillus nidulans)).